The sequence spans 231 residues: NADH-ubiquinone oxidoreductase chain 4 (231 aa).

Transmembrane regions (helical) follow at residues 1–21 (PIAG…YGII), 34–54 (MFLP…LTCL), 63–85 (IAYS…TPWG), 89–111 (AMAL…NTTY), 128–148 (ILPM…ATPP), and 156–176 (LLIM…LGLS).

It belongs to the complex I subunit 4 family.

The protein localises to the mitochondrion membrane. The catalysed reaction is a ubiquinone + NADH + 5 H(+)(in) = a ubiquinol + NAD(+) + 4 H(+)(out). Core subunit of the mitochondrial membrane respiratory chain NADH dehydrogenase (Complex I) that is believed to belong to the minimal assembly required for catalysis. Complex I functions in the transfer of electrons from NADH to the respiratory chain. The immediate electron acceptor for the enzyme is believed to be ubiquinone. The sequence is that of NADH-ubiquinone oxidoreductase chain 4 (MT-ND4) from Bothriechis lateralis (Side-striped palm pitviper).